Consider the following 256-residue polypeptide: Type III pantothenate kinase (256 aa).

6–13 is an ATP binding site; it reads DVGNTNMV. Residues Tyr100 and 107 to 110 each bind substrate; that span reads GADR. Asp109 serves as the catalytic Proton acceptor. Asp129 provides a ligand contact to K(+). Position 132 (Thr132) interacts with ATP. A substrate-binding site is contributed by Thr184.

The protein belongs to the type III pantothenate kinase family. In terms of assembly, homodimer. NH4(+) serves as cofactor. It depends on K(+) as a cofactor.

The protein resides in the cytoplasm. It catalyses the reaction (R)-pantothenate + ATP = (R)-4'-phosphopantothenate + ADP + H(+). The protein operates within cofactor biosynthesis; coenzyme A biosynthesis; CoA from (R)-pantothenate: step 1/5. Its function is as follows. Catalyzes the phosphorylation of pantothenate (Pan), the first step in CoA biosynthesis. The protein is Type III pantothenate kinase of Clostridioides difficile (strain 630) (Peptoclostridium difficile).